The following is a 339-amino-acid chain: WAT1-related protein At5g40210 (339 aa).

A run of 10 helical transmembrane segments spans residues 11–31, 42–62, 74–94, 104–124, 140–160, 168–188, 200–220, 233–253, 266–286, and 289–309; these read GWIL…NTLV, FVVL…LTFF, FSIL…QILG, TLSS…AVVF, VLGT…HGPM, WIIG…SYLV, VVVT…VSLL, FDIT…YYVI, LSMF…IFLG, and LYLG…MVLW. One can recognise an EamA domain in the interval 29–154; the sequence is TLVKAATSKG…LSIIGALVVT (126 aa).

Belongs to the drug/metabolite transporter (DMT) superfamily. Plant drug/metabolite exporter (P-DME) (TC 2.A.7.4) family.

The protein resides in the membrane. The sequence is that of WAT1-related protein At5g40210 from Arabidopsis thaliana (Mouse-ear cress).